A 432-amino-acid chain; its full sequence is Ribosomal protein uS12 methylthiotransferase RimO (432 aa).

The region spanning 1 to 112 is the MTTase N-terminal domain; that stretch reads MKIGVVSLGC…ILNYLGLKEK (112 aa). 6 residues coordinate [4Fe-4S] cluster: Cys10, Cys46, Cys75, Cys134, Cys138, and Cys141. One can recognise a Radical SAM core domain in the interval 120-350; sequence STPRSYAYLK…MAIQRGITRK (231 aa). One can recognise a TRAM domain in the interval 353-422; sequence EEFLGKEIEV…DYDLAGRDTE (70 aa).

This sequence belongs to the methylthiotransferase family. RimO subfamily. It depends on [4Fe-4S] cluster as a cofactor.

It localises to the cytoplasm. The enzyme catalyses L-aspartate(89)-[ribosomal protein uS12]-hydrogen + (sulfur carrier)-SH + AH2 + 2 S-adenosyl-L-methionine = 3-methylsulfanyl-L-aspartate(89)-[ribosomal protein uS12]-hydrogen + (sulfur carrier)-H + 5'-deoxyadenosine + L-methionine + A + S-adenosyl-L-homocysteine + 2 H(+). Catalyzes the methylthiolation of an aspartic acid residue of ribosomal protein uS12. This chain is Ribosomal protein uS12 methylthiotransferase RimO, found in Aquifex aeolicus (strain VF5).